Here is a 368-residue protein sequence, read N- to C-terminus: Biglycan (368 aa).

The first 16 residues, 1–16, serve as a signal peptide directing secretion; the sequence is MWPLWRLVSLLALSQA. Positions 17–37 are excised as a propeptide; it reads LPFEQRGFWDFTLDDGPFMMN. O-linked (Xyl...) (glycosaminoglycan) serine glycans are attached at residues Ser-42 and Ser-47. Intrachain disulfides connect Cys-63/Cys-69 and Cys-67/Cys-76. LRR repeat units follow at residues 82-102, 103-126, 127-150, 151-171, 172-195, 196-220, 221-241, 242-265, 266-289, 290-312, 313-342, and 343-368; these read KSVPKEISPDTTLLDLQNNDI, SELRKDDFKGLQHLYALVLVNNKI, SKIHEKAFSPLRKLQKLYISKNHL, VEIPPNLPSSLVELRIHDNRI, RKVPKGVFSGLRNMNCIEMGGNPL, ENSGFEPGAFDGLKLNYLRISEAKL, TGIPKDLPETLNELHLDHNKI, QAIELEDLLRYSKLYRLGLGHNQI, RMIENGSLSFLPTLRELHLDNNKL, ARVPSGLPDLKLLQVVYLHSNNI, TKVGVNDFCPMGFGVKRAYYNGISLFNNPV, and PYWEVQPATFRCVTDRLAIQFGNYKK. Ser-180 and Ser-198 each carry an O-linked (Xyl...) (glycosaminoglycan) serine glycan. 2 N-linked (GlcNAc...) asparagine glycosylation sites follow: Asn-270 and Asn-311. A disulfide bond links Cys-321 and Cys-354.

This sequence belongs to the small leucine-rich proteoglycan (SLRP) family. SLRP class I subfamily. In terms of assembly, homodimer. Forms a ternary complex with MFAP2 and ELN. In terms of processing, the two attached glycosaminoglycan chains can be either chondroitin sulfate or dermatan sulfate. In terms of tissue distribution, detected in placenta (at protein level). Found in several connective tissues, especially in articular cartilages.

It is found in the secreted. Its subcellular location is the extracellular space. The protein localises to the extracellular matrix. May be involved in collagen fiber assembly. The protein is Biglycan (BGN) of Homo sapiens (Human).